The primary structure comprises 807 residues: Dynein axonemal intermediate chain 4 (807 aa).

2 stretches are compositionally biased toward polar residues: residues 1-11 (MHSSPTSTRKQ) and 22-31 (PRKSISFINP). 2 disordered regions span residues 1-44 (MHSS…AASN) and 300-320 (YSSKGSLPAKDRDPKIQDSES). The segment covering 32–43 (SKSSAGKGYAAS) has biased composition (low complexity). Residues 308 to 317 (AKDRDPKIQD) are compositionally biased toward basic and acidic residues. 6 WD repeats span residues 493 to 533 (QSSY…NIPV), 542 to 590 (KHLG…DCHD), 617 to 657 (SRQA…QYLE), 661 to 701 (GHKG…PFLS), 704 to 743 (PTTYVVYDVSWSPKSAYIFAAANENRVEIWDLQISTLDPL), and 749 to 788 (NPGIKFTTVLFAKETDCLLVGDSDGQVAVYELRNMPTASD).

Part of the multisubunit axonemal dynein complex formed at least of two heavy chains and a number of intermediate and light chains. Associated with axonemal dynein subunits such as, DNAH2, DNAI3, and DYNLT1. Interacts with DYNLT1. In terms of tissue distribution, highly expressed in tissues containing motile cilia, including the trachea, lung, oviduct, and testis.

The protein localises to the cytoplasm. Its subcellular location is the cytoskeleton. The protein resides in the flagellum axoneme. It is found in the cilium axoneme. It localises to the dynein axonemal particle. Functionally, plays a critical role in the assembly of axonemal dynein complex, thereby playing a role in ciliary motility. The protein is Dynein axonemal intermediate chain 4 (Dnai4) of Mus musculus (Mouse).